The sequence spans 542 residues: Phenylalanine--tRNA ligase beta subunit (542 aa).

In terms of domain architecture, B5 spans 269–344 (LRRYTVSVSA…MTIGYDKLSP (76 aa)). D322, D328, E331, and E332 together coordinate Mg(2+).

This sequence belongs to the phenylalanyl-tRNA synthetase beta subunit family. Type 2 subfamily. Tetramer of two alpha and two beta subunits. Requires Mg(2+) as cofactor.

It localises to the cytoplasm. The catalysed reaction is tRNA(Phe) + L-phenylalanine + ATP = L-phenylalanyl-tRNA(Phe) + AMP + diphosphate + H(+). The polypeptide is Phenylalanine--tRNA ligase beta subunit (Sulfolobus acidocaldarius (strain ATCC 33909 / DSM 639 / JCM 8929 / NBRC 15157 / NCIMB 11770)).